Here is a 101-residue protein sequence, read N- to C-terminus: Urinary protein 3 (101 aa).

The first 21 residues, Met-1–Ala-21, serve as a signal peptide directing secretion. The region spanning Leu-22 to Val-99 is the UPAR/Ly6 domain. Intrachain disulfides connect Cys-24–Cys-51, Cys-27–Cys-36, Cys-43–Cys-70, Cys-73–Cys-89, and Cys-90–Cys-96.

It is found in the secreted. This Rattus norvegicus (Rat) protein is Urinary protein 3.